The following is a 606-amino-acid chain: Scavenger receptor class A member 3 (606 aa).

Over methionine 1–arginine 56 the chain is Cytoplasmic. The chain crosses the membrane as a helical; Signal-anchor for type II membrane protein span at residues isoleucine 57 to phenylalanine 77. At arginine 78–tyrosine 606 the chain is on the extracellular side. 10 N-linked (GlcNAc...) asparagine glycosylation sites follow: asparagine 115, asparagine 182, asparagine 224, asparagine 257, asparagine 313, asparagine 337, asparagine 365, asparagine 400, asparagine 430, and asparagine 451. The disordered stretch occupies residues isoleucine 455 to tyrosine 606. Collagen-like domains follow at residues arginine 456–serine 558 and glycine 559–glycine 601. A compositionally biased stretch (low complexity) spans proline 497–arginine 516. Residues glycine 526–glycine 535 show a composition bias toward gly residues. 2 stretches are compositionally biased toward pro residues: residues proline 548–serine 558 and proline 591–tyrosine 606.

It is found in the endoplasmic reticulum membrane. Its subcellular location is the golgi apparatus membrane. Seems to protect cells by scavenging oxidative molecules or harmful products of oxidation. This is Scavenger receptor class A member 3 (Scara3) from Mus musculus (Mouse).